The primary structure comprises 210 residues: dTTP/UTP pyrophosphatase (210 aa).

Catalysis depends on D85, which acts as the Proton acceptor.

The protein belongs to the Maf family. YhdE subfamily. It depends on a divalent metal cation as a cofactor.

The protein resides in the cytoplasm. The catalysed reaction is dTTP + H2O = dTMP + diphosphate + H(+). It catalyses the reaction UTP + H2O = UMP + diphosphate + H(+). Functionally, nucleoside triphosphate pyrophosphatase that hydrolyzes dTTP and UTP. May have a dual role in cell division arrest and in preventing the incorporation of modified nucleotides into cellular nucleic acids. The sequence is that of dTTP/UTP pyrophosphatase from Saccharophagus degradans (strain 2-40 / ATCC 43961 / DSM 17024).